We begin with the raw amino-acid sequence, 353 residues long: Immune-associated nucleotide-binding protein 8 (353 aa).

Residues methionine 1–serine 10 are compositionally biased toward polar residues. Positions methionine 1–glutamate 43 are disordered. Positions proline 12–phenylalanine 34 are enriched in basic and acidic residues. The AIG1-type G domain occupies histidine 40 to lysine 248. The segment at glycine 49–serine 56 is G1. GTP is bound by residues glycine 49–alanine 57 and serine 70. A G2 region spans residues glycine 76–glutamate 80. A G3 region spans residues aspartate 98–glycine 101. The segment at threonine 168–aspartate 171 is G4. A G5 region spans residues aspartate 207–lysine 209. Residue asparagine 208 participates in GTP binding. Residues tyrosine 244 to glutamate 291 adopt a coiled-coil conformation.

Belongs to the TRAFAC class TrmE-Era-EngA-EngB-Septin-like GTPase superfamily. AIG1/Toc34/Toc159-like paraseptin GTPase family. IAN subfamily. In terms of tissue distribution, mainly expressed in leaves.

This chain is Immune-associated nucleotide-binding protein 8, found in Arabidopsis thaliana (Mouse-ear cress).